A 375-amino-acid polypeptide reads, in one-letter code: Non-structural protein NS5 (375 aa).

The sequence is that of Non-structural protein NS5 (NS-5) from Rottboellia (Sorghum).